The sequence spans 967 residues: RNA polymerase II C-terminal domain phosphatase-like 1 (967 aa).

A Nuclear localization signal (NLS) motif is present at residues 38-41 (RKKK). The 251-residue stretch at 151 to 401 (LNLRCLGIVF…TPVLCVARNV (251 aa)) folds into the FCP1 homology domain. Disordered regions lie at residues 548–611 (SEPS…VQSR) and 643–712 (MEKH…RNSD). Residues 590 to 603 (PSEPSFPQRPPVQA) are compositionally biased toward pro residues. Residues 665–684 (RMLHENRRPPKESLRRDEQL) show a composition bias toward basic and acidic residues. 2 consecutive DRBM domains span residues 724–792 (TETS…NLAD) and 855–925 (GSIT…SVRS). The disordered stretch occupies residues 928-967 (GQPLHKRQGSPRSFGGMSNKRLKPDFQRSLQRMPSSGRYS). A required for nuclear localization (NLS) region spans residues 945-967 (SNKRLKPDFQRSLQRMPSSGRYS). The short motif at 947–951 (KRLKP) is the Nuclear localization signal (NLS) element. A compositionally biased stretch (polar residues) spans 955–967 (RSLQRMPSSGRYS).

In terms of assembly, interacts with FREE1, ANAC019, MYB3, MYB4 and MYB32. Binds to DMS3. Interacts with RCF3. Interacts with RS40 and RS41. Interacts with EIF4A3. Interacts with UPF3. The cofactor is Mg(2+). It depends on Co(2+) as a cofactor. Mn(2+) serves as cofactor. As to expression, expressed at very low levels in roots, leaves, stems, flowers and siliques.

It is found in the nucleus. The protein resides in the nucleus speckle. It carries out the reaction O-phospho-L-seryl-[protein] + H2O = L-seryl-[protein] + phosphate. The enzyme catalyses O-phospho-L-threonyl-[protein] + H2O = L-threonyl-[protein] + phosphate. Functionally, processively dephosphorylates 'Ser-5' but not 'Ser-2' of the heptad repeats YSPTSPS in the C-terminal domain of the largest RNA polymerase II subunit (RPB1). This promotes the activity of RNA polymerase II. Together with CPL2, required for male gametes fertility. Multifunctional regulator that modulates plant growth, stress, and phytohormones responses. Negative regulator of stress gene transcription involved in abscisic acid (ABA) mediated and jasmonic acid (JA) mediated signaling pathways, NaCl, osmotic stress, wounding, and cold resistance. Negatively regulates the expression of jasmonic acid (JA) biosynthetic genes in response to wounding. Forms a complex with RCF3 that modulates co-transcriptional processes such as mRNA capping and polyadenylation, and functions to repress stress-inducible gene expression. Dephosphorylates RCF3. Involved in the dephosphorylation of EIF4A3. This dephosphorylation retains EIF4A3 in the nucleus and limits its accumulation in the cytoplasm. Is essential for the degradation of the nonsense-mediated mRNA decay (NMD) transcripts. The polypeptide is RNA polymerase II C-terminal domain phosphatase-like 1 (Arabidopsis thaliana (Mouse-ear cress)).